The primary structure comprises 592 residues: Potassium-transporting ATPase potassium-binding subunit (592 aa).

The next 10 membrane-spanning stretches (helical) occupy residues 7–27 (ILLG…GTYI), 60–80 (LKYA…VYAL), 132–152 (ALAV…IALI), 175–195 (LHVL…QGVI), 279–299 (LSNF…CFTF), 310–330 (WAVL…AMHF), 409–429 (GLYG…LMIG), 449–469 (IAIL…VMLA), 513–533 (VMLG…VLAI), and 556–576 (LFVT…YVPA).

This sequence belongs to the KdpA family. The system is composed of three essential subunits: KdpA, KdpB and KdpC.

The protein resides in the cell inner membrane. In terms of biological role, part of the high-affinity ATP-driven potassium transport (or Kdp) system, which catalyzes the hydrolysis of ATP coupled with the electrogenic transport of potassium into the cytoplasm. This subunit binds the periplasmic potassium ions and delivers the ions to the membrane domain of KdpB through an intramembrane tunnel. The sequence is that of Potassium-transporting ATPase potassium-binding subunit from Dechloromonas aromatica (strain RCB).